The sequence spans 87 residues: U3-theraphotoxin-Hhn1n (87 aa).

Positions 1–24 are cleaved as a signal peptide; sequence MVNMKASMFLTFAGLVLLFVVCYA. Positions 25–52 are excised as a propeptide; the sequence is SESEEKEFPKEMLSSIFAVDNDFKQEER. Intrachain disulfides connect C54-C67, C61-C72, and C66-C79.

The protein belongs to the neurotoxin 10 (Hwtx-1) family. 51 (Hntx-8) subfamily. Hntx-8 sub-subfamily. As to expression, expressed by the venom gland.

It is found in the secreted. In terms of biological role, weakly inhibits Kv11.1/KCNH2/ERG1, Kv1.2/KCNA2, Kv1.3/KCNA3, and Kv2.1/KCNB1. In Cyriopagopus hainanus (Chinese bird spider), this protein is U3-theraphotoxin-Hhn1n.